The following is a 737-amino-acid chain: tRNA-dihydrouridine(47) synthase [NAD(P)(+)] (737 aa).

2 stretches are compositionally biased toward basic and acidic residues: residues 1-11 and 24-33; these read MESQETAKRPI and PATKRVKLDD. Positions 1 to 127 are disordered; it reads MESQETAKRP…GKKKRPKGQN (127 aa). The span at 35–44 shows a compositional bias: low complexity; that stretch reads PVPQIQEEPS. Positions 57–82 are enriched in basic and acidic residues; that stretch reads EDEKPTEQRQDDRDKRRGIAPIKKEY. 2 consecutive C3H1-type zinc fingers follow at residues 142 to 166 and 187 to 208; these read CNSVAWTPEFSPRHCKHGERCNALH and CPVWETHGKCSSGWRCLFVESH. Residues 332 to 334 and Q407 each bind FMN; that span reads PLT. The Proton donor role is filled by C439. FMN-binding positions include K479, H520, 577-579, and 601-602; these read NGD and GR.

Belongs to the Dus family. Dus3 subfamily. Requires FMN as cofactor.

It is found in the cytoplasm. It localises to the nucleus. It catalyses the reaction 5,6-dihydrouridine(47) in tRNA + NAD(+) = uridine(47) in tRNA + NADH + H(+). The catalysed reaction is 5,6-dihydrouridine(47) in tRNA + NADP(+) = uridine(47) in tRNA + NADPH + H(+). It carries out the reaction a 5,6-dihydrouridine in mRNA + NAD(+) = a uridine in mRNA + NADH + H(+). The enzyme catalyses a 5,6-dihydrouridine in mRNA + NADP(+) = a uridine in mRNA + NADPH + H(+). Its function is as follows. Catalyzes the synthesis of dihydrouridine, a modified base found in the D-loop of most tRNAs. Specifically modifies U47 in cytoplasmic tRNAs. Catalyzes the synthesis of dihydrouridine in some mRNAs, thereby affecting their translation. The polypeptide is tRNA-dihydrouridine(47) synthase [NAD(P)(+)] (dus-3) (Neurospora crassa (strain ATCC 24698 / 74-OR23-1A / CBS 708.71 / DSM 1257 / FGSC 987)).